Here is a 242-residue protein sequence, read N- to C-terminus: Small ribosomal subunit protein uS2 (242 aa).

This sequence belongs to the universal ribosomal protein uS2 family.

The sequence is that of Small ribosomal subunit protein uS2 from Aeromonas salmonicida (strain A449).